The chain runs to 302 residues: MRVVFMGSPDFSVPVLEALHAHHEVVCVYCQPPRPAGRGKKDRPTPVQARAEELGLPVRHPKSLRTPEVQADFAALGAEVAVVVAYGLILPQPILDAPDRGCLNIHASLLPRWRGAAPIHRAILAGDDETGICIMQMEAGLDTGPVLMCEKTHIGAEDTVQDLHDRLSGMGARLILGAIEALDDLVPQPQPEEGVTYAEKIAKAEAGIDWSRPAAEIDRQIRGLSPFPGAWTMLGGERVKLLRCRLAEGQGAPGELLEGLVIACGSGAVEITLAQREGKRPMERDEFLRGFALPRGSLATAS.

108–111 (SLLP) is a (6S)-5,6,7,8-tetrahydrofolate binding site.

The protein belongs to the Fmt family.

The catalysed reaction is L-methionyl-tRNA(fMet) + (6R)-10-formyltetrahydrofolate = N-formyl-L-methionyl-tRNA(fMet) + (6S)-5,6,7,8-tetrahydrofolate + H(+). Attaches a formyl group to the free amino group of methionyl-tRNA(fMet). The formyl group appears to play a dual role in the initiator identity of N-formylmethionyl-tRNA by promoting its recognition by IF2 and preventing the misappropriation of this tRNA by the elongation apparatus. The chain is Methionyl-tRNA formyltransferase from Cereibacter sphaeroides (strain ATCC 17025 / ATH 2.4.3) (Rhodobacter sphaeroides).